We begin with the raw amino-acid sequence, 427 residues long: Thymidine phosphorylase (427 aa).

Belongs to the thymidine/pyrimidine-nucleoside phosphorylase family. In terms of assembly, homodimer.

The enzyme catalyses thymidine + phosphate = 2-deoxy-alpha-D-ribose 1-phosphate + thymine. In terms of biological role, the enzymes which catalyze the reversible phosphorolysis of pyrimidine nucleosides are involved in the degradation of these compounds and in their utilization as carbon and energy sources, or in the rescue of pyrimidine bases for nucleotide synthesis. The chain is Thymidine phosphorylase (deoA) from Mycobacterium tuberculosis (strain CDC 1551 / Oshkosh).